The following is a 1057-amino-acid chain: Carbamoyl phosphate synthase large chain (1057 aa).

Residues 1-401 (MPKRNDIKTI…SLLKAIRSLE (401 aa)) form a carboxyphosphate synthetic domain region. ATP contacts are provided by Arg-129, Arg-169, Gly-175, Gly-176, Lys-208, Ile-210, Glu-215, Gly-241, Ile-242, His-243, Gln-284, and Glu-298. Residues 133-327 (RTLMNDLNVP…IAKLAAKIAV (195 aa)) enclose the ATP-grasp 1 domain. 3 residues coordinate Mg(2+): Gln-284, Glu-298, and Asn-300. Residues Gln-284, Glu-298, and Asn-300 each coordinate Mn(2+). Positions 402–546 (YGVHHLGLPN…YGTYETENES (145 aa)) are oligomerization domain. The carbamoyl phosphate synthetic domain stretch occupies residues 547 to 929 (IVTDKEKILV…ALFKGLTGSG (383 aa)). One can recognise an ATP-grasp 2 domain in the interval 671–861 (EALLRKINVP…MAQLAMRAII (191 aa)). ATP is bound by residues Arg-707, Arg-746, Leu-748, Glu-752, Gly-777, Val-778, His-779, Ser-780, Gln-820, and Glu-832. Gln-820, Glu-832, and Asn-834 together coordinate Mg(2+). Residues Gln-820, Glu-832, and Asn-834 each coordinate Mn(2+). In terms of domain architecture, MGS-like spans 930 to 1057 (VEVKDHGTVL…ESMTFTMRQM (128 aa)). The interval 930–1057 (VEVKDHGTVL…ESMTFTMRQM (128 aa)) is allosteric domain.

This sequence belongs to the CarB family. As to quaternary structure, composed of two chains; the small (or glutamine) chain promotes the hydrolysis of glutamine to ammonia, which is used by the large (or ammonia) chain to synthesize carbamoyl phosphate. Tetramer of heterodimers (alpha,beta)4. Mg(2+) is required as a cofactor. The cofactor is Mn(2+).

The catalysed reaction is hydrogencarbonate + L-glutamine + 2 ATP + H2O = carbamoyl phosphate + L-glutamate + 2 ADP + phosphate + 2 H(+). It catalyses the reaction hydrogencarbonate + NH4(+) + 2 ATP = carbamoyl phosphate + 2 ADP + phosphate + 2 H(+). The protein operates within amino-acid biosynthesis; L-arginine biosynthesis; carbamoyl phosphate from bicarbonate: step 1/1. It participates in pyrimidine metabolism; UMP biosynthesis via de novo pathway; (S)-dihydroorotate from bicarbonate: step 1/3. Large subunit of the glutamine-dependent carbamoyl phosphate synthetase (CPSase). CPSase catalyzes the formation of carbamoyl phosphate from the ammonia moiety of glutamine, carbonate, and phosphate donated by ATP, constituting the first step of 2 biosynthetic pathways, one leading to arginine and/or urea and the other to pyrimidine nucleotides. The large subunit (synthetase) binds the substrates ammonia (free or transferred from glutamine from the small subunit), hydrogencarbonate and ATP and carries out an ATP-coupled ligase reaction, activating hydrogencarbonate by forming carboxy phosphate which reacts with ammonia to form carbamoyl phosphate. The protein is Carbamoyl phosphate synthase large chain of Staphylococcus aureus (strain Mu3 / ATCC 700698).